A 452-amino-acid chain; its full sequence is Trigger factor (452 aa).

The 87-residue stretch at 170–256 (DSIVKVDFVE…IKSIKKRDLP (87 aa)) folds into the PPIase FKBP-type domain.

The protein belongs to the FKBP-type PPIase family. Tig subfamily.

The protein resides in the cytoplasm. The enzyme catalyses [protein]-peptidylproline (omega=180) = [protein]-peptidylproline (omega=0). Functionally, involved in protein export. Acts as a chaperone by maintaining the newly synthesized protein in an open conformation. Functions as a peptidyl-prolyl cis-trans isomerase. In Borreliella afzelii (strain PKo) (Borrelia afzelii), this protein is Trigger factor.